The sequence spans 102 residues: uncharacterized protein (102 aa).

The next 3 helical transmembrane spans lie at Ile-14 to Ala-34, Val-35 to Ile-55, and Ile-76 to Ile-96.

It is found in the cell membrane. This is an uncharacterized protein from Methanocaldococcus jannaschii (strain ATCC 43067 / DSM 2661 / JAL-1 / JCM 10045 / NBRC 100440) (Methanococcus jannaschii).